A 547-amino-acid chain; its full sequence is MNKLIRRAVTIFAVTSVASLFASGVLETSMAESLSTNVISLADTKAKDNTSHKSKKARKNHSKETPVDRKEVAPVHESKATGPKQDSCFGRMYTVKVNDDRNVEITQAVPEYATVGSPYPIEITATGKRDCVDVIITQQLPCEAEFVRSDPATTPTADGKLVWKIDRLGQGEKSKITVWVKPLKEGCCFTAATVCACPEIRSVTKCGQPAICVKQEGPENACLRCPVVYKINVVNQGTATARNVVVENPVPDGYAHSSGQRVLTFTLGDMQPGEHRTITVEFCPLKRGRATNIATVSYCGGHKNTASVTTVINEPCVQVSIAGADWSYVCKPVEYVISVSNPGDLVLRDVVVEDTLSPGVTVLEAAGAQISCNKVVWTVKELNPGESLQYKVLVRAQTPGQFTNNVVVKSCSDCGTCTSCAEATTYWKGVAATHMCVVDTCDPVCVGENTVYRICVTNRGSAEDTNVSLMLKFSKELQPVSFSGPTKGTITGNTVVFDSLPRLGSKETVEFSVTLKAVSAGDARGEAILSSDTLTVPVSDTENTHIY.

A signal peptide spans 1–22 (MNKLIRRAVTIFAVTSVASLFA). Residues 23–40 (SGVLETSMAESLSTNVIS) constitute a propeptide that is removed on maturation. The segment at 45–84 (KAKDNTSHKSKKARKNHSKETPVDRKEVAPVHESKATGPK) is disordered. Over residues 52–61 (HKSKKARKNH) the composition is skewed to basic residues. Over residues 62-79 (SKETPVDRKEVAPVHESK) the composition is skewed to basic and acidic residues.

As to quaternary structure, part of a disulfide cross-linked outer membrane complex (COMC) composed of the major outer membrane porin (MOMP), the small cysteine-rich protein (OmcA) and the large cysteine-rich periplasmic protein (OmcB).

The protein resides in the periplasm. Its function is as follows. In elementary bodies (EBs, the infectious stage, which is able to survive outside the host cell) provides the structural integrity of the outer envelope through disulfide cross-links with the small cysteine-rich protein and the major outer membrane porin. It has been described in publications as the Sarkosyl-insoluble COMC (Chlamydia outer membrane complex), and serves as the functional equivalent of peptidoglycan. The protein is Large cysteine-rich periplasmic protein OmcB, serovar C (omcB) of Chlamydia trachomatis.